The following is a 202-amino-acid chain: Secreted RxLR effector protein 93 (202 aa).

The first 16 residues, methionine 1–alanine 16, serve as a signal peptide directing secretion. The tract at residues threonine 29–aspartate 58 is disordered. The span at serine 37–glutamine 48 shows a compositional bias: basic and acidic residues. Positions arginine 49–arginine 61 match the RxLR-dEER motif.

This sequence belongs to the RxLR effector family.

It is found in the secreted. The protein resides in the host nucleus. Secreted effector that completely suppresses the host cell death induced by cell death-inducing proteins. This is Secreted RxLR effector protein 93 from Plasmopara viticola (Downy mildew of grapevine).